The sequence spans 218 residues: MADTCCSRTCVVAASTLSVCSSDLSCGNQVSSPSACIGSSWQVDDCQETCCEPTCCAPSCCAPAPRLTLICAPVNCESSPCCQPACSSSSPCQQACCVPVCCRPVCCTPVCCRPVCCRPVCCTPVCCRPVCCRPVCCRPVCCRPVCCTPVCCRPMCCEASPCSAPSSCCRPSSSVSLLCRPVCRPTCCVPTFFCQPSCCHPASSVSLLCQPSCSSSAC.

Residues 26-202 (CGNQVSSPSA…FCQPSCCHPA (177 aa)) are 16 X 5 AA repeats of C-C-X(3). Repeat copies occupy residues 50-54 (CCEPT), 55-59 (CCAPS), 60-64 (CCAPA), 86-90 (CSSSS), 96-100 (CCVPV), 101-105 (CCRPV), 111-115 (CCRPV), 121-125 (CCTPV), 131-135 (CCRPV), 136-140 (CCRPV), 141-145 (CCRPV), 151-155 (CCRPM), 161-167 (PCSAPSS), 168-172 (CCRPS), 187-191 (CCVPT), and 198-202 (CCHPA).

Belongs to the KRTAP type 10 family. In terms of assembly, interacts with hair keratins.

Functionally, in the hair cortex, hair keratin intermediate filaments are embedded in an interfilamentous matrix, consisting of hair keratin-associated proteins (KRTAP), which are essential for the formation of a rigid and resistant hair shaft through their extensive disulfide bond cross-linking with abundant cysteine residues of hair keratins. The matrix proteins include the high-sulfur and high-glycine-tyrosine keratins. The chain is Keratin-associated protein 10-8 from Bos taurus (Bovine).